Consider the following 260-residue polypeptide: Thaumatin-like protein 1 (260 aa).

The signal sequence occupies residues 1–32; that stretch reads MIITVLHSHVSFYFIILSFLFFHALHLVGSDG. 8 cysteine pairs are disulfide-bonded: cysteine 41/cysteine 255, cysteine 89/cysteine 100, cysteine 105/cysteine 112, cysteine 166/cysteine 245, cysteine 171/cysteine 228, cysteine 179/cysteine 191, cysteine 195/cysteine 204, and cysteine 205/cysteine 215.

The protein belongs to the thaumatin family. As to expression, expressed only in roots.

In terms of biological role, involved in local responses of roots to colonization by non-pathogenic plant growth-promoting rhizobacteria (PGPR) fluorescent Pseudomonas spp., but seems to not being required for the establishment of subsequent induced systemic resistance (ISR). The polypeptide is Thaumatin-like protein 1 (Arabidopsis thaliana (Mouse-ear cress)).